The chain runs to 1527 residues: ATP-binding cassette sub-family C member 3 (1527 aa).

Residues 1–32 (MDALCGSGELGSKFWDSNLSVHTENPDLTPCF) are Extracellular-facing. Residue Asn18 is glycosylated (N-linked (GlcNAc...) asparagine). The helical transmembrane segment at 33 to 53 (QNSLLAWVPCIYLWVALPCYL) threads the bilayer. Topologically, residues 54–73 (LYLRHHCRGYIILSHLSKLK) are cytoplasmic. Residues 74 to 94 (MVLGVLLWCVSWADLFYSFHG) traverse the membrane as a helical segment. Residues 95–99 (LVHGR) are Extracellular-facing. The chain crosses the membrane as a helical span at residues 100–120 (APAPVFFVTPLVVGVTMLLAT). The Cytoplasmic portion of the chain corresponds to 121–132 (LLIQYERLQGVQ). The chain crosses the membrane as a helical span at residues 133 to 153 (SSGVLIIFWFLCVVCAIVPFR). Over 154 to 171 (SKILLAKAEGEISDPFRF) the chain is Extracellular. The chain crosses the membrane as a helical span at residues 172 to 192 (TTFYIHFALVLSALILACFRE). Topologically, residues 193–302 (KPPFFSAKNV…RPRKPSFLKA (110 aa)) are cytoplasmic. The helical transmembrane segment at 303–323 (LLATFGSSFLISACFKLIQDL) threads the bilayer. The ABC transmembrane type-1 1 domain occupies 311 to 594 (FLISACFKLI…LPQLISNLTQ (284 aa)). Residues 324–349 (LSFINPQLLSILIRFISNPMAPSWWG) are Extracellular-facing. A helical transmembrane segment spans residues 350–370 (FLVAGLMFLCSMMQSLILQHY). At 371–426 (YHYIFVTGVKFRTGIMGVIYRKALVITNSVKRASTVGEIVNLMSVDAQRFMDLAPF) the chain is on the cytoplasmic side. Residues 427–447 (LNLLWSAPLQIILAIYFLWQN) form a helical membrane-spanning segment. Over 448–450 (LGP) the chain is Extracellular. Residues 451–471 (SVLAGVAFMVLLIPLNGAVAV) form a helical membrane-spanning segment. Topologically, residues 472–533 (KMRAFQVKQM…LLRTAAYLHT (62 aa)) are cytoplasmic. A helical membrane pass occupies residues 534–554 (TTTFTWMCSPFLVTLITLWVY). The Extracellular segment spans residues 555 to 576 (VYVDPNNVLDAEKAFVSVSLFN). The chain crosses the membrane as a helical span at residues 577-597 (ILRLPLNMLPQLISNLTQASV). Residues 598–963 (SLKRIQQFLS…VELSVFWDYA (366 aa)) are Cytoplasmic-facing. Positions 629 to 851 (IHSGTFTWAQ…NGSFANFLCN (223 aa)) constitute an ABC transporter 1 domain. Residue 661-668 (GPVGCGKS) participates in ATP binding. Phosphoserine is present on residues Ser908 and Ser911. Residues 910-932 (LSSDGEGQGRPVPRRHLGPSEKV) form a disordered region. A helical transmembrane segment spans residues 964-984 (KAVGLCTTLAICLLYVGQSAA). The region spanning 971 to 1252 (TLAICLLYVG…MIRMMSDLES (282 aa)) is the ABC transmembrane type-1 2 domain. The Extracellular segment spans residues 985-1021 (AIGANVWLSAWTNDAMADSRQNNTSLRLGVYAALGIL). N-linked (GlcNAc...) asparagine glycans are attached at residues Asn1006 and Asn1007. The chain crosses the membrane as a helical span at residues 1022–1042 (QGFLVMLAAMAMAAGGIQAAR). Residues 1043–1085 (VLHQALLHNKIRSPQSFFDTTPSGRILNCFSKDIYVVDEVLAP) are Cytoplasmic-facing. The helical transmembrane segment at 1086-1106 (VILMLLNSFFNAISTLVVIMA) threads the bilayer. A topological domain (extracellular) is located at residue Ser1107. Residues 1108–1128 (TPLFTVVILPLAVLYTLVQRF) form a helical membrane-spanning segment. Topologically, residues 1129–1199 (YAATSRQLKR…ISNRWLSIGV (71 aa)) are cytoplasmic. A helical membrane pass occupies residues 1200–1220 (EFVGNCVVLFAALFAVIGRSS). Residues 1221–1222 (LN) are Extracellular-facing. A helical transmembrane segment spans residues 1223 to 1243 (PGLVGLSVSYSLQVTFALNWM). Over 1244–1527 (IRMMSDLESN…YGMARDAGLA (284 aa)) the chain is Cytoplasmic. An ABC transporter 2 domain is found at 1291–1523 (FRNYSVRYRP…RGIFYGMARD (233 aa)). ATP is bound at residue 1323–1330 (GRTGAGKS).

Belongs to the ABC transporter superfamily. ABCC family. Conjugate transporter (TC 3.A.1.208) subfamily. As to expression, mainly expressed in the liver. Also expressed in small intestine, colon, prostate, testis, brain and at a lower level in the kidney. In testis, localized to peritubular myoid cells, Leydig cells, along the basal membrane of Sertoli cells and moderately in the adluminal compartment of the seminiferous tubules.

It localises to the basolateral cell membrane. It is found in the basal cell membrane. The enzyme catalyses taurocholate(in) + ATP + H2O = taurocholate(out) + ADP + phosphate + H(+). It catalyses the reaction glycocholate(in) + ATP + H2O = glycocholate(out) + ADP + phosphate + H(+). It carries out the reaction taurolithocholate 3-sulfate(in) + ATP + H2O = taurolithocholate 3-sulfate(out) + ADP + phosphate + H(+). The catalysed reaction is taurochenodeoxycholate 3-sulfate(in) + ATP + H2O = taurochenodeoxycholate 3-sulfate(out) + ADP + phosphate + H(+). The enzyme catalyses an S-substituted glutathione(in) + ATP + H2O = an S-substituted glutathione(out) + ADP + phosphate + H(+). It catalyses the reaction ATP + H2O + xenobioticSide 1 = ADP + phosphate + xenobioticSide 2.. It carries out the reaction 17beta-estradiol 17-O-(beta-D-glucuronate)(in) + ATP + H2O = 17beta-estradiol 17-O-(beta-D-glucuronate)(out) + ADP + phosphate + H(+). The catalysed reaction is dehydroepiandrosterone 3-sulfate(in) + ATP + H2O = dehydroepiandrosterone 3-sulfate(out) + ADP + phosphate + H(+). The enzyme catalyses leukotriene C4(in) + ATP + H2O = leukotriene C4(out) + ADP + phosphate + H(+). It catalyses the reaction (4Z,15Z)-bilirubin IXalpha C8-beta-D-glucuronoside(in) + ATP + H2O = (4Z,15Z)-bilirubin IXalpha C8-beta-D-glucuronoside(out) + ADP + phosphate + H(+). It carries out the reaction (4Z,15Z)-bilirubin IXalpha C8,C12-beta-D-bisglucuronoside(in) + ATP + H2O = (4Z,15Z)-bilirubin IXalpha C8,C12-beta-D-bisglucuronoside(out) + ADP + phosphate + H(+). ATP-dependent transporter of the ATP-binding cassette (ABC) family that binds and hydrolyzes ATP to enable active transport of various substrates including many drugs, toxicants and endogenous compound across cell membranes. Transports glucuronide conjugates such as bilirubin diglucuronide, estradiol-17-beta-o-glucuronide and GSH conjugates such as leukotriene C4 (LTC4). Transports also various bile salts (taurocholate, glycocholate, taurochenodeoxycholate-3-sulfate, taurolithocholate- 3-sulfate). Does not contribute substantially to bile salt physiology but provides an alternative route for the export of bile acids and glucuronides from cholestatic hepatocytes. May contribute to regulate the transport of organic compounds in testes across the blood-testis-barrier. Can confer resistance to various anticancer drugs, methotrexate, tenoposide and etoposide, by decreasing accumulation of these drugs in cells. The protein is ATP-binding cassette sub-family C member 3 of Homo sapiens (Human).